A 116-amino-acid polypeptide reads, in one-letter code: MSQQLLEELGRRQYRTDIPEFRVGDTVRVGVKVVEGNRERVQDFEGVVIRRRGEGINENFTVRRIASHGIGVERTFLLHAPRIDYIKVIRQGKVRRAKLYYLRGRTGKAARIRERR.

The protein belongs to the bacterial ribosomal protein bL19 family.

Its function is as follows. This protein is located at the 30S-50S ribosomal subunit interface and may play a role in the structure and function of the aminoacyl-tRNA binding site. The sequence is that of Large ribosomal subunit protein bL19 from Chloroflexus aggregans (strain MD-66 / DSM 9485).